Consider the following 198-residue polypeptide: Ribonuclease HII (198 aa).

Residues 10-198 (QLVAGVDEVG…PVKRALGLAS (189 aa)) form the RNase H type-2 domain. A divalent metal cation contacts are provided by Asp16, Glu17, and Asp108.

The protein belongs to the RNase HII family. The cofactor is Mn(2+). Mg(2+) is required as a cofactor.

It is found in the cytoplasm. It catalyses the reaction Endonucleolytic cleavage to 5'-phosphomonoester.. Endonuclease that specifically degrades the RNA of RNA-DNA hybrids. The chain is Ribonuclease HII from Escherichia coli O81 (strain ED1a).